Consider the following 299-residue polypeptide: Probable endonuclease 4 (299 aa).

9 residues coordinate Zn(2+): H69, H110, E145, D179, H182, H214, D227, H229, and E259.

Belongs to the AP endonuclease 2 family. Zn(2+) serves as cofactor.

The enzyme catalyses Endonucleolytic cleavage to 5'-phosphooligonucleotide end-products.. Its function is as follows. Endonuclease IV plays a role in DNA repair. It cleaves phosphodiester bonds at apurinic or apyrimidinic (AP) sites, generating a 3'-hydroxyl group and a 5'-terminal sugar phosphate. The polypeptide is Probable endonuclease 4 (Geobacillus kaustophilus (strain HTA426)).